The primary structure comprises 29 residues: Scolopendra 8011.73 Da toxin (29 aa).

As to expression, expressed by the venom gland.

It localises to the secreted. This chain is Scolopendra 8011.73 Da toxin, found in Scolopendra viridicornis nigra (Brazilian giant centipede).